Here is a 162-residue protein sequence, read N- to C-terminus: Protein cornichon homolog 2 (162 aa).

Over 1–10 (MAFTFAAFCY) the chain is Cytoplasmic. A helical transmembrane segment spans residues 11–31 (MLTLVLCASLIFFIIWHIIAF). The Lumenal segment spans residues 32–72 (DDLRTDFKDPIEQGNPSRARERIKNVERVCCLLRKLVVPEY). A helical membrane pass occupies residues 73-93 (CIHGLFCLMFMCAAEWVTLGL). Residues 94-138 (NIPLLFYHLWRYFHRPADGSEVMFDPVSIMNVDILNYCQKEAWCK) lie on the Cytoplasmic side of the membrane. A helical membrane pass occupies residues 139-161 (LAFYLLSFFYYLYRVGATVRYVS). A topological domain (lumenal) is located at residue Ala-162.

It belongs to the cornichon family.

It is found in the membrane. Its function is as follows. Regulates the trafficking and gating properties of AMPA-selective glutamate receptors (AMPARs). In Xenopus laevis (African clawed frog), this protein is Protein cornichon homolog 2 (cnih2).